We begin with the raw amino-acid sequence, 274 residues long: Elongation factor Ts (274 aa).

Positions 79-82 (TDFV) are involved in Mg(2+) ion dislocation from EF-Tu.

It belongs to the EF-Ts family.

The protein resides in the cytoplasm. Functionally, associates with the EF-Tu.GDP complex and induces the exchange of GDP to GTP. It remains bound to the aminoacyl-tRNA.EF-Tu.GTP complex up to the GTP hydrolysis stage on the ribosome. The chain is Elongation factor Ts from Porphyromonas gingivalis (strain ATCC 33277 / DSM 20709 / CIP 103683 / JCM 12257 / NCTC 11834 / 2561).